The following is a 304-amino-acid chain: Uricase (304 aa).

Ala2 carries the post-translational modification N-acetylalanine. N6-acetyllysine; alternate is present on residues Lys10 and Lys23. Residues Lys10 and Lys23 each carry the N6-succinyllysine; alternate modification. Residue Lys23 is the Charge relay system of the active site. Lys27 and Lys36 each carry N6-acetyllysine. A phosphoserine mark is found at Ser39 and Ser63. Residue Thr68 is the Charge relay system of the active site. Thr68 and Asp69 together coordinate urate. N6-acetyllysine occurs at positions 118, 122, and 164. Phe170 provides a ligand contact to urate. Lys175 and Lys185 each carry N6-acetyllysine. Arg187 provides a ligand contact to urate. N6-acetyllysine; alternate occurs at positions 221 and 228. Residues Lys221 and Lys228 each carry the N6-succinyllysine; alternate modification. Position 232 is a phosphoserine (Ser232). 3 residues coordinate urate: Val235, Gln236, and Asn262. His264 serves as the catalytic Charge relay system. Residue Lys278 is modified to N6-acetyllysine. Tyr289 bears the Phosphotyrosine mark. Positions 302–304 (SRL) match the Microbody targeting signal motif.

Belongs to the uricase family.

It is found in the peroxisome. It catalyses the reaction urate + O2 + H2O = 5-hydroxyisourate + H2O2. Its pathway is purine metabolism; urate degradation; (S)-allantoin from urate: step 1/3. Its function is as follows. Catalyzes the oxidation of uric acid to 5-hydroxyisourate, which is further processed to form (S)-allantoin. The protein is Uricase (UOX) of Macaca mulatta (Rhesus macaque).